Reading from the N-terminus, the 512-residue chain is Cytochrome P450 72A11 (512 aa).

A helical membrane pass occupies residues 2 to 22; sequence EISVASVTVSVAVVVVSWWVW. Residue Cys-460 coordinates heme.

Belongs to the cytochrome P450 family. It depends on heme as a cofactor.

It localises to the membrane. The sequence is that of Cytochrome P450 72A11 (CYP72A11) from Arabidopsis thaliana (Mouse-ear cress).